Here is a 140-residue protein sequence, read N- to C-terminus: Large ribosomal subunit protein uL11 (140 aa).

This sequence belongs to the universal ribosomal protein uL11 family. Part of the ribosomal stalk of the 50S ribosomal subunit. Interacts with L10 and the large rRNA to form the base of the stalk. L10 forms an elongated spine to which L12 dimers bind in a sequential fashion forming a multimeric L10(L12)X complex. Post-translationally, one or more lysine residues are methylated.

Functionally, forms part of the ribosomal stalk which helps the ribosome interact with GTP-bound translation factors. This chain is Large ribosomal subunit protein uL11, found in Geotalea daltonii (strain DSM 22248 / JCM 15807 / FRC-32) (Geobacter daltonii).